Consider the following 499-residue polypeptide: DAZ protein 1 (499 aa).

Residues 1 to 29 (MMSPPLRYQKDQQNQQHQQNQSQQAAHQM) form a disordered region. The span at 12-28 (QQNQQHQQNQSQQAAHQ) shows a compositional bias: low complexity. Residues 66-144 (PNRIFVGGFP…SRKLNLGPAI (79 aa)) enclose the RRM domain. The span at 195 to 224 (FVYPPLRSQDQSRQQSEQQTTPQNSPTNLQ) shows a compositional bias: low complexity. Disordered stretches follow at residues 195–304 (FVYP…NNGG) and 406–499 (YPGN…TKNN). One can recognise a DAZ domain in the interval 214 to 236 (TTPQNSPTNLQHQQSPQVFFGGD). Residues 251 to 262 (EKSEVSPEKHES) are compositionally biased toward basic and acidic residues. A compositionally biased stretch (polar residues) spans 263-279 (VSPQPLLPNQNVLNTQY). Over residues 280–304 (SQGQQQWNSNVQQQQQQQMDSNNGG) the composition is skewed to low complexity. Residues 406–425 (YPGNFSQQHTMGNNENTFSL) show a composition bias toward polar residues. The segment covering 438–447 (KPSECQDKKT) has biased composition (basic and acidic residues). Low complexity predominate over residues 480-499 (LSPLSASLQSLAISSPTKNN).

Belongs to the RRM DAZ family. In terms of tissue distribution, germline specific. More strongly expressed during oogenesis than during spermatogenesis. During the larval stages, it is more abundant at the distal region than the proximal region of the gonad. In young adult hermaphrodites, it is expressed at a very low level in the distal mitotic region of the gonad, and begins to accumulate in the meiotic transition zone. Highly expressed in the proximal pachytene region. Not expressed in mature oocytes. Not expressed in the spermatheca. Weakly or not expressed in the germline of adult males.

Its function is as follows. RNA-binding protein that plays a central role in oogenesis, but not for spermatogenesis. Required for meiotic entry and germline differentiation, at the pachytene stage of meiosis I of female germline regardless of the sex of the soma. May act by regulating translation of specific mRNAs, possibly by binding to their 3'-UTR. This chain is DAZ protein 1 (daz-1), found in Caenorhabditis elegans.